We begin with the raw amino-acid sequence, 379 residues long: Anhydro-N-acetylmuramic acid kinase (379 aa).

9–16 lines the ATP pocket; that stretch reads GTSADGVD.

The protein belongs to the anhydro-N-acetylmuramic acid kinase family.

It catalyses the reaction 1,6-anhydro-N-acetyl-beta-muramate + ATP + H2O = N-acetyl-D-muramate 6-phosphate + ADP + H(+). It functions in the pathway amino-sugar metabolism; 1,6-anhydro-N-acetylmuramate degradation. Its pathway is cell wall biogenesis; peptidoglycan recycling. Its function is as follows. Catalyzes the specific phosphorylation of 1,6-anhydro-N-acetylmuramic acid (anhMurNAc) with the simultaneous cleavage of the 1,6-anhydro ring, generating MurNAc-6-P. Is required for the utilization of anhMurNAc either imported from the medium or derived from its own cell wall murein, and thus plays a role in cell wall recycling. The sequence is that of Anhydro-N-acetylmuramic acid kinase from Prochlorococcus marinus (strain MIT 9211).